The following is a 512-amino-acid chain: 2,3-bisphosphoglycerate-independent phosphoglycerate mutase (512 aa).

Asp11 and Ser61 together coordinate Mn(2+). Ser61 acts as the Phosphoserine intermediate in catalysis. Residues His122, 152 to 153 (RD), Arg184, Arg190, 259 to 262 (RADR), and Lys332 contribute to the substrate site. Residues Asp399, His403, Asp440, His441, and His459 each coordinate Mn(2+).

It belongs to the BPG-independent phosphoglycerate mutase family. In terms of assembly, monomer. The cofactor is Mn(2+).

It catalyses the reaction (2R)-2-phosphoglycerate = (2R)-3-phosphoglycerate. The protein operates within carbohydrate degradation; glycolysis; pyruvate from D-glyceraldehyde 3-phosphate: step 3/5. Catalyzes the interconversion of 2-phosphoglycerate and 3-phosphoglycerate. The chain is 2,3-bisphosphoglycerate-independent phosphoglycerate mutase from Francisella tularensis subsp. holarctica (strain FTNF002-00 / FTA).